A 481-amino-acid chain; its full sequence is Sestrin-1 (481 aa).

The segment at 63 to 244 (FADAFTDLGR…ICDITNGNHG (182 aa)) is N-terminal domain; may mediate the alkylhydroperoxide reductase activity. The Cysteine sulfenic acid (-SOH) intermediate role is filled by Cys-122. Residues 295-316 (KTESMVFSTEDEDPPPDIDVSR) are disordered. Residues 310-481 (PDIDVSRHFE…ALRAITRYMT (172 aa)) form a C-terminal domain; mediates TORC1 regulation region. L-leucine contacts are provided by residues 375–378 (TYNT), Thr-387, and Glu-452.

This sequence belongs to the sestrin family.

Its subcellular location is the nucleus. It is found in the cytoplasm. It carries out the reaction a hydroperoxide + L-cysteinyl-[protein] = S-hydroxy-L-cysteinyl-[protein] + an alcohol. In terms of biological role, may function as an intracellular leucine sensor that negatively regulates the TORC1 signaling pathway through the GATOR complex. In absence of leucine, binds the GATOR subcomplex GATOR2 and prevents TORC1 signaling. Binding of leucine to SESN2 disrupts its interaction with GATOR2 thereby activating the TORC1 signaling pathway. This stress-inducible metabolic regulator may also play a role in protection against oxidative and genotoxic stresses. May prevent the accumulation of reactive oxygen species (ROS) through the alkylhydroperoxide reductase activity born by the N-terminal domain of the protein. This Xenopus laevis (African clawed frog) protein is Sestrin-1.